The primary structure comprises 171 residues: Small ribosomal subunit protein mS25 (171 aa).

The protein belongs to the mitochondrion-specific ribosomal protein mS25 family. Component of the mitochondrial ribosome small subunit (28S) which comprises a 12S rRNA and about 30 distinct proteins.

Its subcellular location is the mitochondrion. This is Small ribosomal subunit protein mS25 (Mrps25) from Rattus norvegicus (Rat).